A 338-amino-acid polypeptide reads, in one-letter code: Glycerol-3-phosphate dehydrogenase [NAD(P)+] (338 aa).

NADPH is bound by residues Ser-13, Trp-14, and Lys-108. 3 residues coordinate sn-glycerol 3-phosphate: Lys-108, Gly-139, and Ser-141. Ala-143 lines the NADPH pocket. Positions 194, 247, 257, 258, and 259 each coordinate sn-glycerol 3-phosphate. Catalysis depends on Lys-194, which acts as the Proton acceptor. Arg-258 is a binding site for NADPH. The NADPH site is built by Val-282 and Glu-284.

The protein belongs to the NAD-dependent glycerol-3-phosphate dehydrogenase family.

Its subcellular location is the cytoplasm. The enzyme catalyses sn-glycerol 3-phosphate + NAD(+) = dihydroxyacetone phosphate + NADH + H(+). It catalyses the reaction sn-glycerol 3-phosphate + NADP(+) = dihydroxyacetone phosphate + NADPH + H(+). The protein operates within membrane lipid metabolism; glycerophospholipid metabolism. Catalyzes the reduction of the glycolytic intermediate dihydroxyacetone phosphate (DHAP) to sn-glycerol 3-phosphate (G3P), the key precursor for phospholipid synthesis. This is Glycerol-3-phosphate dehydrogenase [NAD(P)+] from Streptococcus agalactiae serotype III (strain NEM316).